Here is a 686-residue protein sequence, read N- to C-terminus: Leucine-rich repeat-containing protein 49 (686 aa).

LRR repeat units lie at residues 113 to 134, 135 to 156, 157 to 178, 179 to 200, 201 to 222, 223 to 244, and 245 to 266; these read HLRL…SNLQ, RLIF…STLK, SLRV…ENLK, NLDV…NHLC, DLRV…NGLD, SLTE…DNLP, and CLQR…SCLA. The 39-residue stretch at 279 to 317 folds into the LRRCT domain; it reads NPIAQESWYKHTVLQNMMQLRQLDMKRITEEERRVASVV. 2 disordered regions span residues 311–332 and 359–381; these read RRVA…HKQS and ASTQ…DGGN. Residues 319 to 341 adopt a coiled-coil conformation; sequence KKEEEKKRESHKQSLLKEKKRLT.

As to quaternary structure, part of the neuronal tubulin polyglutamylase complex which contains TPGS1, TPGS2, TTLL1, LRRC49 and NICN1. Interacts with PCM1; TTLL1, TPGS1, TPGS2 and LRRC49.

Its subcellular location is the cytoplasm. The protein localises to the cytoskeleton. The protein resides in the microtubule organizing center. It is found in the centrosome. It localises to the centriolar satellite. Subunit of the tubulin polyglutamylase complex (TPGC). The complex mediates cilia and flagella polyglutamylation which is essential for their biogenesis and motility. The polypeptide is Leucine-rich repeat-containing protein 49 (Lrrc49) (Mus musculus (Mouse)).